The primary structure comprises 679 residues: FAST kinase domain-containing protein 2, mitochondrial (679 aa).

Phosphoserine occurs at positions 113 and 126. Residues 607 to 664 (VAVLCVPKSAYCLNSNHLRGLMAMKIRHLNVMGFHVILIHNWELKKLKMEDAVTFVRK) enclose the RAP domain.

Belongs to the FAST kinase family. In terms of assembly, monomer. Found in a complex with GRSF1, DDX28, DHX30 and FASTKD5. Associates with the 16S mitochondrial rRNA (16S mt-rRNA). Forms a regulatory protein-RNA complex, consisting of RCC1L, NGRN, RPUSD3, RPUSD4, TRUB2, FASTKD2 and 16S mt-rRNA.

It localises to the mitochondrion matrix. The protein localises to the mitochondrion nucleoid. Its function is as follows. Plays an important role in assembly of the mitochondrial large ribosomal subunit. As a component of a functional protein-RNA module, consisting of RCC1L, NGRN, RPUSD3, RPUSD4, TRUB2, FASTKD2 and 16S mitochondrial ribosomal RNA (16S mt-rRNA), controls 16S mt-rRNA abundance and is required for intra-mitochondrial translation. May play a role in mitochondrial apoptosis. The chain is FAST kinase domain-containing protein 2, mitochondrial (Fastkd2) from Rattus norvegicus (Rat).